Reading from the N-terminus, the 1495-residue chain is Pregnancy zone protein (1495 aa).

The first 24 residues, 1-24, serve as a signal peptide directing secretion; the sequence is MRRNQLPTPAFLLLFLLLPRDATT. An intrachain disulfide couples cysteine 48 to cysteine 86. N-linked (GlcNAc...) asparagine glycans are attached at residues asparagine 55 and asparagine 157. 2 disulfides stabilise this stretch: cysteine 249-cysteine 298 and cysteine 267-cysteine 286. N-linked (GlcNAc...) asparagine glycans are attached at residues asparagine 382, asparagine 405, and asparagine 412. Cysteine 469 and cysteine 562 are oxidised to a cystine. The N-linked (GlcNAc...) asparagine glycan is linked to asparagine 568. Intrachain disulfides connect cysteine 594-cysteine 783, cysteine 642-cysteine 689, cysteine 833-cysteine 861, cysteine 859-cysteine 895, cysteine 933-cysteine 1339, and cysteine 1092-cysteine 1140. A bait region region spans residues 686-744; it reads PRFCQEFQHYPAMGGVAPQALAVAASGPGSSFRAMGVPMMGLDYSDEINQVVEVRETVR. 2 N-linked (GlcNAc...) asparagine glycosylation sites follow: asparagine 881 and asparagine 942. A cross-link (isoglutamyl cysteine thioester (Cys-Gln)) is located at residues 984-987; the sequence is CGEQ. The N-linked (GlcNAc...) asparagine glycan is linked to asparagine 1003. Asparagine 1385 and asparagine 1443 each carry an N-linked (GlcNAc...) asparagine glycan.

It belongs to the protease inhibitor I39 (alpha-2-macroglobulin) family. As to expression, highest expression in liver, medium expression in ovary, heart and stomach. Low expression in lung, kidney and uterus. Protein found in plasma.

The protein resides in the secreted. Is able to inhibit all four classes of proteinases by a unique 'trapping' mechanism. This protein has a peptide stretch, called the 'bait region' which contains specific cleavage sites for different proteinases. When a proteinase cleaves the bait region, a conformational change is induced in the protein which traps the proteinase. The entrapped enzyme remains active against low molecular weight substrates (activity against high molecular weight substrates is greatly reduced). Following cleavage in the bait region, a thioester bond is hydrolyzed and mediates the covalent binding of the protein to the proteinase. The protein is Pregnancy zone protein (Pzp) of Mus musculus (Mouse).